A 155-amino-acid chain; its full sequence is Histone H2B.5 (155 aa).

Composition is skewed to basic and acidic residues over residues 1-28 and 36-54; these read MAPK…EKAP and EKRL…GKKD. The disordered stretch occupies residues 1-63; it reads MAPKAEKKPA…DRAGRKKAKK (63 aa). Lys-7 and Lys-37 each carry N6-acetyllysine. A Glycyl lysine isopeptide (Lys-Gly) (interchain with G-Cter in ubiquitin) cross-link involves residue Lys-151.

This sequence belongs to the histone H2B family. In terms of assembly, the nucleosome is a histone octamer containing two molecules each of H2A, H2B, H3 and H4 assembled in one H3-H4 heterotetramer and two H2A-H2B heterodimers. The octamer wraps approximately 147 bp of DNA. Can be acetylated to form H2BK6ac and H2BK33ac. In terms of processing, monoubiquitinated by BRE1 to form H2BK143ub1 and deubiquitinated by UBP26. Required for heterochromatic histone H3 di- and trimethylation at H3K4me. May give a specific tag for epigenetic transcriptional activation.

Its subcellular location is the nucleus. It localises to the chromosome. Core component of nucleosome. Nucleosomes wrap and compact DNA into chromatin, limiting DNA accessibility to the cellular machineries which require DNA as a template. Histones thereby play a central role in transcription regulation, DNA repair, DNA replication and chromosomal stability. DNA accessibility is regulated via a complex set of post-translational modifications of histones, also called histone code, and nucleosome remodeling. This chain is Histone H2B.5 (H2B.5), found in Oryza sativa subsp. japonica (Rice).